Reading from the N-terminus, the 842-residue chain is Glycogen phosphorylase, muscle form (842 aa).

Residue Ser2 is modified to N-acetylserine. Phosphoserine; by PHK; in form phosphorylase A is present on Ser15. A Phosphoserine modification is found at Ser26. AMP-binding residues include Asp43 and Tyr76. 2 positions are modified to phosphotyrosine: Tyr204 and Tyr227. AMP is bound at residue 310–319 (RRFKSSKFGC). Phosphoserine is present on Ser430. Tyr473 carries the phosphotyrosine modification. Position 514 is a phosphoserine (Ser514). An N6-(pyridoxal phosphate)lysine modification is found at Lys681. 2 positions are modified to phosphoserine: Ser747 and Ser748.

This sequence belongs to the glycogen phosphorylase family. In terms of assembly, homodimer. Homotetramer; to form the enzymatically active phosphorylase A. Requires pyridoxal 5'-phosphate as cofactor. Phosphorylation of Ser-15 converts phosphorylase B (unphosphorylated) to phosphorylase A.

The catalysed reaction is [(1-&gt;4)-alpha-D-glucosyl](n) + phosphate = [(1-&gt;4)-alpha-D-glucosyl](n-1) + alpha-D-glucose 1-phosphate. Allosterically regulated through the non-covalent binding of metabolites, being activated by AMP and inhibited by ATP, ADP, and glucose-6-phosphate. The activity is also controlled by post-translational modifications including phosphorylation. Its function is as follows. Allosteric enzyme that catalyzes the rate-limiting step in glycogen catabolism, the phosphorolytic cleavage of glycogen to produce glucose-1-phosphate, and plays a central role in maintaining cellular and organismal glucose homeostasis. In Rattus norvegicus (Rat), this protein is Glycogen phosphorylase, muscle form.